A 119-amino-acid chain; its full sequence is Large ribosomal subunit protein bL20 (119 aa).

The protein belongs to the bacterial ribosomal protein bL20 family.

In terms of biological role, binds directly to 23S ribosomal RNA and is necessary for the in vitro assembly process of the 50S ribosomal subunit. It is not involved in the protein synthesizing functions of that subunit. This Sorangium cellulosum (strain So ce56) (Polyangium cellulosum (strain So ce56)) protein is Large ribosomal subunit protein bL20.